Reading from the N-terminus, the 359-residue chain is Membrane-bound lytic murein transglycosylase C (359 aa).

The signal sequence occupies residues 1 to 16; it reads MKKYLALALIAPLLIS. Cys-17 carries N-palmitoyl cysteine lipidation. Residue Cys-17 is the site of S-diacylglycerol cysteine attachment.

This sequence belongs to the transglycosylase Slt family.

Its subcellular location is the cell outer membrane. It catalyses the reaction Exolytic cleavage of the (1-&gt;4)-beta-glycosidic linkage between N-acetylmuramic acid (MurNAc) and N-acetylglucosamine (GlcNAc) residues in peptidoglycan, from either the reducing or the non-reducing ends of the peptidoglycan chains, with concomitant formation of a 1,6-anhydrobond in the MurNAc residue.. Functionally, murein-degrading enzyme. May play a role in recycling of muropeptides during cell elongation and/or cell division. This Escherichia coli (strain SMS-3-5 / SECEC) protein is Membrane-bound lytic murein transglycosylase C.